A 647-amino-acid chain; its full sequence is Putative lipase YDL109C (647 aa).

The active-site Charge relay system is Ser274. Residues 502-523 (PPPSPTLYEGTAAKEGETRKTR) are disordered. The span at 513 to 523 (AAKEGETRKTR) shows a compositional bias: basic and acidic residues.

The protein belongs to the putative lipase ROG1 family.

Functionally, involved in lipid metabolism. The chain is Putative lipase YDL109C from Saccharomyces cerevisiae (strain ATCC 204508 / S288c) (Baker's yeast).